The following is a 135-amino-acid chain: Cilia- and flagella-associated protein 144 (135 aa).

Positions 76–100 are disordered; sequence QGPKKKYSETQTEAQEIGWDPNPLI.

Belongs to the CFAP144 family. As to quaternary structure, microtubule inner protein component of sperm flagellar doublet microtubules. Predominantly expressed in tissues containing motile cilia.

Its subcellular location is the cytoplasm. It localises to the cytoskeleton. The protein localises to the cilium axoneme. The protein resides in the flagellum axoneme. The polypeptide is Cilia- and flagella-associated protein 144 (Mus musculus (Mouse)).